Here is a 514-residue protein sequence, read N- to C-terminus: Peptide chain release factor 3 (514 aa).

Residues 8–268 (KKRRTFAIIS…TFLEFAPEPH (261 aa)) enclose the tr-type G domain. GTP-binding positions include 17–24 (SHPDAGKT), 85–89 (DTPGH), and 139–142 (NKLD).

Belongs to the TRAFAC class translation factor GTPase superfamily. Classic translation factor GTPase family. PrfC subfamily.

It localises to the cytoplasm. Its function is as follows. Increases the formation of ribosomal termination complexes and stimulates activities of RF-1 and RF-2. It binds guanine nucleotides and has strong preference for UGA stop codons. It may interact directly with the ribosome. The stimulation of RF-1 and RF-2 is significantly reduced by GTP and GDP, but not by GMP. This Streptococcus pyogenes serotype M28 (strain MGAS6180) protein is Peptide chain release factor 3.